We begin with the raw amino-acid sequence, 173 residues long: Ribulose bisphosphate carboxylase small subunit, chloroplastic 1 (173 aa).

A chloroplast-targeting transit peptide spans 1 to 49; the sequence is MASIPATVATVAQANMVAPFTGLKANAAFPVTKKVNDFSTLPSNGGRVQ.

It belongs to the RuBisCO small chain family. As to quaternary structure, heterohexadecamer of 8 large and 8 small subunits.

It localises to the plastid. The protein resides in the chloroplast. In terms of biological role, ruBisCO catalyzes two reactions: the carboxylation of D-ribulose 1,5-bisphosphate, the primary event in carbon dioxide fixation, as well as the oxidative fragmentation of the pentose substrate. Both reactions occur simultaneously and in competition at the same active site. Although the small subunit is not catalytic it is essential for maximal activity. The chain is Ribulose bisphosphate carboxylase small subunit, chloroplastic 1 from Flaveria pringlei.